The sequence spans 271 residues: Cell surface glycoprotein CD200 receptor 2 (271 aa).

The N-terminal stretch at 1–23 (MSAPRLLISIIIMVSASSSSCMG) is a signal peptide. Residues 24–239 (GKQMTQNYST…TSGSPALSLL (216 aa)) lie on the Extracellular side of the membrane. Asparagine 30, asparagine 39, asparagine 86, asparagine 92, asparagine 189, and asparagine 217 each carry an N-linked (GlcNAc...) asparagine glycan. Positions 46 to 132 (MDINAVLCCP…YRGIVVTPDG (87 aa)) constitute an Ig-like V-type domain. The Ig-like C2-type domain occupies 133–221 (NFHRGYHLQV…SHLTGNKSLS (89 aa)). A disulfide bond links cysteine 160 and cysteine 209. A helical membrane pass occupies residues 240–260 (IILYVKLSLFVVILVTTGFVF). The Cytoplasmic segment spans residues 261-271 (FQRINHVRKVL).

Belongs to the CD200R family.

The protein resides in the membrane. In terms of biological role, may be a receptor for the CD200/OX2 cell surface glycoprotein. In Homo sapiens (Human), this protein is Cell surface glycoprotein CD200 receptor 2 (CD200R1L).